Here is a 434-residue protein sequence, read N- to C-terminus: Serine hydroxymethyltransferase (434 aa).

(6S)-5,6,7,8-tetrahydrofolate is bound by residues Leu-133 and 137-139 (GHL). Lys-242 bears the N6-(pyridoxal phosphate)lysine mark.

This sequence belongs to the SHMT family. As to quaternary structure, homodimer. Pyridoxal 5'-phosphate is required as a cofactor.

Its subcellular location is the cytoplasm. It carries out the reaction (6R)-5,10-methylene-5,6,7,8-tetrahydrofolate + glycine + H2O = (6S)-5,6,7,8-tetrahydrofolate + L-serine. The protein operates within one-carbon metabolism; tetrahydrofolate interconversion. Its pathway is amino-acid biosynthesis; glycine biosynthesis; glycine from L-serine: step 1/1. In terms of biological role, catalyzes the reversible interconversion of serine and glycine with tetrahydrofolate (THF) serving as the one-carbon carrier. This reaction serves as the major source of one-carbon groups required for the biosynthesis of purines, thymidylate, methionine, and other important biomolecules. Also exhibits THF-independent aldolase activity toward beta-hydroxyamino acids, producing glycine and aldehydes, via a retro-aldol mechanism. This chain is Serine hydroxymethyltransferase, found in Hyphomicrobium methylovorum.